We begin with the raw amino-acid sequence, 150 residues long: Deoxyuridine 5'-triphosphate nucleotidohydrolase (150 aa).

Substrate-binding positions include 70-72 (RSG), N83, and 87-89 (TID).

This sequence belongs to the dUTPase family. Mg(2+) is required as a cofactor.

It catalyses the reaction dUTP + H2O = dUMP + diphosphate + H(+). It participates in pyrimidine metabolism; dUMP biosynthesis; dUMP from dCTP (dUTP route): step 2/2. This enzyme is involved in nucleotide metabolism: it produces dUMP, the immediate precursor of thymidine nucleotides and it decreases the intracellular concentration of dUTP so that uracil cannot be incorporated into DNA. This is Deoxyuridine 5'-triphosphate nucleotidohydrolase from Desulfotalea psychrophila (strain LSv54 / DSM 12343).